Consider the following 68-residue polypeptide: Beta-toxin Im-2 (68 aa).

The 67-residue stretch at 1 to 67 (KDGYPMVRAG…VWTYEKNTCK (67 aa)) folds into the LCN-type CS-alpha/beta domain. Intrachain disulfides connect cysteine 15–cysteine 66, cysteine 19–cysteine 40, cysteine 26–cysteine 47, and cysteine 30–cysteine 49.

This sequence belongs to the long (4 C-C) scorpion toxin superfamily. Sodium channel inhibitor family. Beta subfamily. Expressed by the venom gland.

The protein localises to the secreted. Functionally, beta toxins bind voltage-independently at site-4 of sodium channels (Nav) and shift the voltage of activation toward more negative potentials thereby affecting sodium channel activation and promoting spontaneous and repetitive firing. Is toxic to both insect and mammals. Induces paralysis in Acheta domestica crickets, but does not induce death, whereas intracerebroventricular injection into mice causes immediate death (at a dose of 0.05 ug/g). In Isometrus maculatus (Lesser brown scorpion), this protein is Beta-toxin Im-2.